Consider the following 151-residue polypeptide: Small ribosomal subunit protein uS15 (151 aa).

Positions 1–16 are enriched in basic residues; the sequence is MPHRSRDKKGRSRSVR. The disordered stretch occupies residues 1 to 20; it reads MPHRSRDKKGRSRSVRPAHP.

The protein belongs to the universal ribosomal protein uS15 family. As to quaternary structure, part of the 30S ribosomal subunit.

The sequence is that of Small ribosomal subunit protein uS15 from Pyrobaculum aerophilum (strain ATCC 51768 / DSM 7523 / JCM 9630 / CIP 104966 / NBRC 100827 / IM2).